A 329-amino-acid polypeptide reads, in one-letter code: NAC domain-containing protein 71 (329 aa).

The region spanning 9 to 166 (LPPGFRFHPT…DWVLCRIYNK (158 aa)) is the NAC domain. The segment at 228 to 281 (RSGSADRDSMPRLHTDSSGSEHVLSPSPSPDDFPGGGDHDYAESQPSGGCGGWP) is disordered. Over residues 230–242 (GSADRDSMPRLHT) the composition is skewed to basic and acidic residues.

Interacts with NAC048 and NAC002. As to expression, expressed in roots and embryo. Weakly expressed in callus.

It localises to the nucleus. Transcription activator that binds to the promoter of the stress response gene LEA19. Involved in tolerance to abiotic stresses. This Oryza sativa subsp. japonica (Rice) protein is NAC domain-containing protein 71.